A 167-amino-acid polypeptide reads, in one-letter code: Endothelin-3 (167 aa).

The signal sequence occupies residues 1–19 (MELGLWLLLGLTVTSAAAA). Residues 20–50 (LPAQPGNAGQERGPGRSGDQEEKRVPAHHRP) constitute a propeptide that is removed on maturation. The disordered stretch occupies residues 22 to 45 (AQPGNAGQERGPGRSGDQEEKRVP). 2 cysteine pairs are disulfide-bonded: Cys-53–Cys-67 and Cys-55–Cys-63. Positions 74–167 (INTPEQTVPY…KSRTDKVHQP (94 aa)) are excised as a propeptide. The tract at residues 85–112 (LSNHRGSLRGKRSSGPVPESSQSSPQTR) is disordered. The span at 97–109 (SSGPVPESSQSSP) shows a compositional bias: low complexity. Residues 115 to 135 (CACSGVDDKACAYFCAHVTSY) are endothelin-like. Basic and acidic residues predominate over residues 140 to 149 (EKAAAEEKQE). A disordered region spans residues 140 to 167 (EKAAAEEKQETGGPRQRLKSRTDKVHQP).

The protein belongs to the endothelin/sarafotoxin family.

The protein resides in the secreted. Endothelins are endothelium-derived vasoconstrictor peptides. The protein is Endothelin-3 (Edn3) of Rattus norvegicus (Rat).